Consider the following 62-residue polypeptide: MARGNQREIARQKNMKKTQEISKGKRKEDSLTASQRKQRDSEIMQQKQKIANEKKSMQTTEK.

Composition is skewed to basic and acidic residues over residues 1–30 (MARG…KEDS) and 50–62 (IANE…TTEK). The segment at 1-62 (MARGNQREIA…EKKSMQTTEK (62 aa)) is disordered.

The protein belongs to the SERF family. In terms of assembly, interacts with SNCA; this interaction promotes the aggregation of SNCA. In terms of tissue distribution, expressed in brain (at protein level). Highly expressed in the testis.

It is found in the cytoplasm. It localises to the cytosol. The protein resides in the nucleus. Functionally, positive regulator of amyloid protein aggregation and proteotoxicity. Induces conformational changes in amyloid proteins, such as APP, HTT, and SNCA, driving them into compact formations preceding the formation of aggregates. This Mus musculus (Mouse) protein is Small EDRK-rich factor 1 (Serf1).